Here is a 382-residue protein sequence, read N- to C-terminus: Homoserine O-succinyltransferase (382 aa).

Positions 51 to 359 (NAVLICHALS…DAPWGHDAFL (309 aa)) constitute an AB hydrolase-1 domain. Ser157 serves as the catalytic Nucleophile. Arg227 lines the substrate pocket. Active-site residues include Asp322 and His355. Asp356 serves as a coordination point for substrate.

It belongs to the AB hydrolase superfamily. MetX family. Homodimer.

The protein localises to the cytoplasm. The enzyme catalyses L-homoserine + succinyl-CoA = O-succinyl-L-homoserine + CoA. It functions in the pathway amino-acid biosynthesis; L-methionine biosynthesis via de novo pathway; O-succinyl-L-homoserine from L-homoserine: step 1/1. Its function is as follows. Transfers a succinyl group from succinyl-CoA to L-homoserine, forming succinyl-L-homoserine. The sequence is that of Homoserine O-succinyltransferase from Marinobacter nauticus (strain ATCC 700491 / DSM 11845 / VT8) (Marinobacter aquaeolei).